The following is a 95-amino-acid chain: Protein TusB (95 aa).

This sequence belongs to the DsrH/TusB family. As to quaternary structure, heterohexamer, formed by a dimer of trimers. The hexameric TusBCD complex contains 2 copies each of TusB, TusC and TusD. The TusBCD complex interacts with TusE.

The protein localises to the cytoplasm. Its function is as follows. Part of a sulfur-relay system required for 2-thiolation of 5-methylaminomethyl-2-thiouridine (mnm(5)s(2)U) at tRNA wobble positions. This chain is Protein TusB, found in Serratia proteamaculans (strain 568).